A 579-amino-acid polypeptide reads, in one-letter code: Nif-specific regulatory protein (579 aa).

Positions 40–187 (DPVAEVPQIF…MVASLLEQAL (148 aa)) constitute a GAF domain. The 229-residue stretch at 226 to 454 (IVGSSPAIAE…LENCVNRAAA (229 aa)) folds into the Sigma-54 factor interaction domain. ATP is bound by residues 254–261 (GESGTGKE) and 317–326 (ADGGTLFLDE). An inter-domain linker region spans residues 464–536 (EELACRQGAC…PLRTKTAQLS (73 aa)). A divalent metal cation-binding residues include C468 and C473. The tract at residues 502–529 (RVSAPPPEPAPAPEPAPEAPPREEVPLR) is disordered. Tandem repeats lie at residues 505 to 506 (AP), 507 to 508 (PP), 509 to 510 (EP), 511 to 512 (AP), 513 to 514 (AP), 515 to 516 (EP), and 517 to 518 (AP). Residues 505–518 (APPPEPAPAPEPAP) are 7 X 2 AA tandem repeats of X-P. Residues 505 to 520 (APPPEPAPAPEPAPEA) show a composition bias toward pro residues. The tract at residues 537–579 (REELLRALESAGWVQAKAARLLGMTPRQIAYALQKFEIELRKI) is C-terminal DNA-binding domain. The segment at residues 551–570 (QAKAARLLGMTPRQIAYALQ) is a DNA-binding region (H-T-H motif).

In terms of assembly, interacts with sigma-54.

In terms of biological role, required for activation of most nif operons, which are directly involved in nitrogen fixation. The chain is Nif-specific regulatory protein (nifA1) from Rhodobacter capsulatus (Rhodopseudomonas capsulata).